A 514-amino-acid polypeptide reads, in one-letter code: RNA-splicing ligase RtcB homolog (514 aa).

5 residues coordinate Mn(2+): aspartate 128, cysteine 131, histidine 236, histidine 268, and histidine 362. 235-239 (NHYAE) contributes to the GMP binding site. Residues 362 to 363 (HN), 411 to 414 (GGTM), serine 418, 437 to 440 (HGAG), and lysine 513 each bind GMP. Histidine 437 serves as the catalytic GMP-histidine intermediate.

It belongs to the RtcB family. Catalytic component of the tRNA-splicing ligase complex. Mn(2+) is required as a cofactor.

The enzyme catalyses a 3'-end 3'-phospho-ribonucleotide-RNA + a 5'-end dephospho-ribonucleoside-RNA + GTP = a ribonucleotidyl-ribonucleotide-RNA + GMP + diphosphate. The catalysed reaction is a 3'-end 2',3'-cyclophospho-ribonucleotide-RNA + a 5'-end dephospho-ribonucleoside-RNA + GTP + H2O = a ribonucleotidyl-ribonucleotide-RNA + GMP + diphosphate + H(+). Functionally, catalytic subunit of the tRNA-splicing ligase complex that acts by directly joining spliced tRNA halves to mature-sized tRNAs by incorporating the precursor-derived splice junction phosphate into the mature tRNA as a canonical 3',5'-phosphodiester. May act as an RNA ligase with broad substrate specificity, and may function toward other RNAs. This chain is RNA-splicing ligase RtcB homolog, found in Ostreococcus lucimarinus (strain CCE9901).